A 561-amino-acid polypeptide reads, in one-letter code: Inner membrane ABC transporter ATP-binding protein YddA (561 aa).

Over 1-3 (MIT) the chain is Cytoplasmic. The chain crosses the membrane as a helical span at residues 4–24 (IPITLRMLIAKYLCLLKPFWL). The Periplasmic portion of the chain corresponds to 25–31 (RKNNKTS). Residues 32–52 (VLLIIIILAMILGVVKIQVWL) form a helical membrane-spanning segment. An ABC transmembrane type-1 domain is found at 35-337 (IIIILAMILG…FIYKYDELAE (303 aa)). At 53 to 70 (NDWNNDFFNALSQKETDK) the chain is on the cytoplasmic side. The helical transmembrane segment at 71–91 (LWQLVLWFPALLGIFVLISVN) threads the bilayer. Topologically, residues 92–151 (KTWLIKLLTIRWREWLTDYYLNRWFADKNYYFTQIYGEHKNTDNPDQRIAEDILLLISKT) are periplasmic. Residues 152 to 172 (LSLSFGFIQSLSMLITFTVIL) traverse the membrane as a helical segment. The Cytoplasmic portion of the chain corresponds to 173–187 (WESAGTLSFTVGGTE). A helical membrane pass occupies residues 188–208 (WNIQGYMVYTVVLIVIGGTLF). Over 209 to 290 (THKVGKRIRP…WQNIYSRSLS (82 aa)) the chain is Periplasmic. The chain crosses the membrane as a helical span at residues 291 to 311 (VLPYFLLLPQFISGQINLGGL). Residues 312–561 (MKSRQAFMLV…DDICDISAVL (250 aa)) are Cytoplasmic-facing. The ABC transporter domain occupies 367–561 (VQVADASIRT…DDICDISAVL (195 aa)). Residue 400–407 (GYSGAGKT) participates in ATP binding.

Belongs to the ABC transporter superfamily.

The protein localises to the cell inner membrane. The polypeptide is Inner membrane ABC transporter ATP-binding protein YddA (yddA) (Escherichia coli (strain K12)).